The primary structure comprises 462 residues: MTITPATHAISINPATGEQLSVLPWAGADDIENALQLAAAGFRDWRETNIDYRAEKLRDIGKALRARSEEMAQMITREMGKPINQARAEVAKSANLCDWYAEHGPAMLKAEPTLVENQQAVIEYRPLGTILAIMPWNFPLWQVMRGAVPIILAGNGYLLKHAPNVMGCAQLIAQVFKDAGIPQGVYGWLNADNDGVSQMIKDSRIAAVTVTGSVRAGAAIGAQAGAALKKCVLELGGSDPFIVLNDADLELAVKAAVAGRYQNTGQVCAAAKRFIIEEGIASAFTERFVAAAAALKMGDPRDEENALGPMARFDLRDELHHQVEKTLAQGARLLLGGEKMAGAGNYYPPTVLANVTPEMTAFREEMFGPVAAITIAKDAEHALELANDSEFGLSATIFTTDETQARQMAARLECGGVFINGYCASDARVAFGGVKKSGFGRELSHFGLHEFCNIQTVWKDRI.

Residues 136 to 137 (WN), 160 to 163 (KHAP), and 212 to 213 (GS) each bind NADP(+). The active-site Proton acceptor is the Glu-234. Leu-235 is an NADP(+) binding site. The Nucleophile role is filled by Cys-268. Glu-365 contacts NADP(+).

Belongs to the aldehyde dehydrogenase family. As to quaternary structure, homodimer.

The enzyme catalyses succinate semialdehyde + NAD(+) + H2O = succinate + NADH + 2 H(+). The catalysed reaction is succinate semialdehyde + NADP(+) + H2O = succinate + NADPH + 2 H(+). Its pathway is amino-acid degradation; 4-aminobutanoate degradation. Its function is as follows. Catalyzes the NAD(+)-dependent oxidation of succinate semialdehyde to succinate. It acts preferentially with NAD as cosubstrate but can also use NADP. Prevents the toxic accumulation of succinate semialdehyde (SSA) and plays an important role when arginine and putrescine are used as the sole nitrogen or carbon sources. The polypeptide is Succinate semialdehyde dehydrogenase [NAD(P)+] Sad (sad) (Escherichia coli (strain K12)).